A 284-amino-acid polypeptide reads, in one-letter code: tRNA pseudouridine synthase B (284 aa).

Catalysis depends on Asp-40, which acts as the Nucleophile.

Belongs to the pseudouridine synthase TruB family. Type 1 subfamily.

The enzyme catalyses uridine(55) in tRNA = pseudouridine(55) in tRNA. Its function is as follows. Responsible for synthesis of pseudouridine from uracil-55 in the psi GC loop of transfer RNAs. This chain is tRNA pseudouridine synthase B, found in Helicobacter hepaticus (strain ATCC 51449 / 3B1).